The sequence spans 21 residues: Peptide PGLa-R4 (21 aa).

At leucine 21 the chain carries Leucine amide.

Expressed by the skin glands.

Its subcellular location is the secreted. Its function is as follows. Antimicrobial peptide. This is Peptide PGLa-R4 from Xenopus ruwenzoriensis (Uganda clawed frog).